The primary structure comprises 356 residues: Protein HEXIM1 (356 aa).

2 stretches are compositionally biased toward basic and acidic residues: residues 1 to 11 (MAEPLLSEHQH) and 24 to 47 (VHEE…DSRW). Residues 1–160 (MAEPLLSEHQ…RRRPSKKKRH (160 aa)) are disordered. Residues 48 to 58 (QSRASLQSGSR) show a composition bias toward polar residues. The span at 84–93 (CLEKGEKGQN) shows a compositional bias: basic and acidic residues. Ser-98 and Ser-103 each carry phosphoserine. Over residues 145–160 (LGKKKHRRRPSKKKRH) the composition is skewed to basic residues. The segment at 147 to 174 (KKKHRRRPSKKKRHWKPYYKLTWEEKKK) is basic region; mediates nuclear localization and interaction with 7SK snRNA and NR3C1. The interaction with P-TEFb stretch occupies residues 199 to 202 (PYNT). Residues 207 to 247 (MDDHDQEEPDLKTGLYPKRAAAKSDDTSDEDFVEEAGEEDG) are autoinhibitory acidic region; in absence of 7SK snRNA interacts with the basic region preventing interaction with P-TEFb and modulating subcellular localization. The disordered stretch occupies residues 209-259 (DHDQEEPDLKTGLYPKRAAAKSDDTSDEDFVEEAGEEDGGSDGMGGDGSEF). Ser-230 is modified (phosphoserine). Position 233 is a phosphothreonine (Thr-233). The span at 233–248 (TSDEDFVEEAGEEDGG) shows a compositional bias: acidic residues. Residues Ser-234, Ser-249, and Ser-257 each carry the phosphoserine modification. The stretch at 280–346 (SKQELIKEYL…LTENELHRQQ (67 aa)) forms a coiled coil. Positions 283-311 (ELIKEYLELEKCLSRKEDENNRLRLESKR) are mediates interaction with CCNT1. A required for inhibition of ESR1-dependent transcription region spans residues 307 to 352 (LESKRLGGVDARVRELELELDRLRAENRQLLTENELHRQQERAPPS). A disordered region spans residues 337-356 (LTENELHRQQERAPPSKFGD).

Belongs to the HEXIM family. As to quaternary structure, homooligomer and heterooligomer with HEXIM2; probably dimeric. Core component of the 7SK RNP complex, at least composed of 7SK RNA, LARP7, MEPCE, HEXIM1 (or HEXIM2) and P-TEFb (composed of CDK9 and CCNT1/cyclin-T1). Interacts with the N-CoR complex through NCOR1. Interacts with ESR1 and NR3C1. May interact with NF-kappa-B through RELA. Interacts with CCNT2; mediates formation of a tripartite complex with KPNA2. Part of the HDP-RNP complex composed of at least HEXIM1, PRKDC, XRCC5, XRCC6, paraspeckle proteins (SFPQ, NONO, PSPC1, RBM14, and MATR3) and NEAT1 non-coding RNA.

The protein localises to the nucleus. The protein resides in the cytoplasm. In terms of biological role, transcriptional regulator which functions as a general RNA polymerase II transcription inhibitor. Core component of the 7SK RNP complex: in cooperation with 7SK snRNA sequesters P-TEFb in a large inactive 7SK snRNP complex preventing RNA polymerase II phosphorylation and subsequent transcriptional elongation. May also regulate NF-kappa-B, ESR1, NR3C1 and CIITA-dependent transcriptional activity. Plays a role in the regulation of DNA virus-mediated innate immune response by assembling into the HDP-RNP complex, a complex that serves as a platform for IRF3 phosphorylation and subsequent innate immune response activation through the cGAS-STING pathway. This is Protein HEXIM1 (Hexim1) from Rattus norvegicus (Rat).